The sequence spans 363 residues: Peptide chain release factor 1 (363 aa).

Position 237 is an N5-methylglutamine (glutamine 237).

Belongs to the prokaryotic/mitochondrial release factor family. Methylated by PrmC. Methylation increases the termination efficiency of RF1.

The protein resides in the cytoplasm. Its function is as follows. Peptide chain release factor 1 directs the termination of translation in response to the peptide chain termination codons UAG and UAA. The polypeptide is Peptide chain release factor 1 (Mesoplasma florum (strain ATCC 33453 / NBRC 100688 / NCTC 11704 / L1) (Acholeplasma florum)).